Consider the following 485-residue polypeptide: Cysteine--tRNA ligase (485 aa).

C29 is a Zn(2+) binding site. Residues 31–41 (VTVYDHCHIGH) carry the 'HIGH' region motif. Zn(2+)-binding residues include C209, H234, and E238. Residues 266–270 (KMSKS) carry the 'KMSKS' region motif. K269 contributes to the ATP binding site.

This sequence belongs to the class-I aminoacyl-tRNA synthetase family. Monomer. Zn(2+) is required as a cofactor.

Its subcellular location is the cytoplasm. The enzyme catalyses tRNA(Cys) + L-cysteine + ATP = L-cysteinyl-tRNA(Cys) + AMP + diphosphate. This is Cysteine--tRNA ligase from Geobacter metallireducens (strain ATCC 53774 / DSM 7210 / GS-15).